The sequence spans 187 residues: Peptide deformylase 1 (187 aa).

Residues cysteine 107 and histidine 149 each contribute to the Fe cation site. Residue glutamate 150 is part of the active site. Histidine 153 lines the Fe cation pocket.

The protein belongs to the polypeptide deformylase family. It depends on Fe(2+) as a cofactor.

The catalysed reaction is N-terminal N-formyl-L-methionyl-[peptide] + H2O = N-terminal L-methionyl-[peptide] + formate. Its function is as follows. Removes the formyl group from the N-terminal Met of newly synthesized proteins. Requires at least a dipeptide for an efficient rate of reaction. N-terminal L-methionine is a prerequisite for activity but the enzyme has broad specificity at other positions. The chain is Peptide deformylase 1 from Nostoc sp. (strain PCC 7120 / SAG 25.82 / UTEX 2576).